Reading from the N-terminus, the 551-residue chain is MKTPADTGFAFPDWAYKPESSPGSRQIQLWHFILELLRKEEYQGVIAWQGDYGEFVIKDPDEVARLWGVRKCKPQMNYDKLSRALRYYYNKRILHKTKGKRFTYKFNFNKLVLVNYPFIDMGLAGGAVPQSAPPVPSGGSHFRFPPSTPSEVLSPTEDPRSPPACSSSSSSLFSAVVARRLGRGSVSDCSDGTSELEEPLGEDPRARPPGPPELGAFRGPPLARLPHDPGVFRVYPRPRGGPEPLSPFPVSPLAGPGSLLPPQLSPALPMTPTHLAYTPSPTLSPMYPSGGGGPSGSGGGSHFSFSPEDMKRYLQAHTQSVYNYHLSPRAFLHYPGLVVPQPQRPDKCPLPPMAPETPPVPSSASSSSSSSSSPFKFKLQPPPLGRRQRAAGEKAPGGTDKSSGGSGSGGLAEGAGAVAPPPPPPQIKVEPISEGESEEVEVTDISDEDEEDGEVFKTPRAPPAPPKPEPGEAPGVAQCMPLKLRFKRRWSEDCRLEGGGCLSGGPEDEGEDKKVRGDVGPGESGGPLTPRRVSSDLQHATAQLSLEHRDS.

Phosphothreonine is present on residues T3 and T7. Phosphoserine occurs at positions 20 and 24. The ETS DNA-binding region spans I27–N107. 2 disordered regions span residues Q130–S169 and G184–S304. A phosphoserine mark is found at S185 and S190. The span at R239–V250 shows a compositional bias: pro residues. Positions S251–L268 are enriched in low complexity. Gly residues predominate over residues S289 to S301. Position 327 is a phosphoserine (S327). The segment at P342–V476 is disordered. Over residues C348–P361 the composition is skewed to pro residues. Low complexity predominate over residues S362–S373. Over residues G404–E413 the composition is skewed to gly residues. Phosphoserine occurs at positions 433 and 437. Residues S433–G453 are compositionally biased toward acidic residues. A Phosphothreonine modification is found at T443. At S446 the chain carries Phosphoserine. Residues K467, K483, and K514 each participate in a glycyl lysine isopeptide (Lys-Gly) (interchain with G-Cter in SUMO2) cross-link. The segment at R495 to S551 is disordered. T529 carries the phosphothreonine; by MAPK1 modification. Phosphoserine occurs at positions 534, 535, and 551. A compositionally biased stretch (polar residues) spans S535 to L544.

Belongs to the ETS family. Post-translationally, phosphorylated by multiple kinases including MAPK1/ERK2 at THR-529. Phosphorylation regulates the activity of ERF. In terms of tissue distribution, expressed along the osteogenic margins of the developing calvarial bones, in a similar distribution to that observed for the master osteogenic regulator RUNX2.

The protein resides in the nucleus. Potent transcriptional repressor that binds to the H1 element of the Ets2 promoter. May regulate other genes involved in cellular proliferation. Required for extraembryonic ectoderm differentiation, ectoplacental cone cavity closure, and chorioallantoic attachment. May be important for regulating trophoblast stem cell differentiation. The polypeptide is ETS domain-containing transcription factor ERF (Erf) (Mus musculus (Mouse)).